Reading from the N-terminus, the 64-residue chain is DNA gyrase inhibitor YacG (64 aa).

4 residues coordinate Zn(2+): Cys9, Cys12, Cys28, and Cys32. The segment at Asp42–Tyr64 is disordered. Over residues Ser54–Tyr64 the composition is skewed to acidic residues.

Belongs to the DNA gyrase inhibitor YacG family. In terms of assembly, interacts with GyrB. Zn(2+) is required as a cofactor.

Inhibits all the catalytic activities of DNA gyrase by preventing its interaction with DNA. Acts by binding directly to the C-terminal domain of GyrB, which probably disrupts DNA binding by the gyrase. The protein is DNA gyrase inhibitor YacG of Vibrio vulnificus (strain CMCP6).